The chain runs to 393 residues: Phosphoglycerate kinase (393 aa).

Residues 22–24, R37, 60–63, R119, and R152 contribute to the substrate site; these read DFN and HLGR. Residues K202, G293, E324, and 350-353 contribute to the ATP site; that span reads GGDS.

This sequence belongs to the phosphoglycerate kinase family. As to quaternary structure, monomer.

It localises to the cytoplasm. It carries out the reaction (2R)-3-phosphoglycerate + ATP = (2R)-3-phospho-glyceroyl phosphate + ADP. It functions in the pathway carbohydrate degradation; glycolysis; pyruvate from D-glyceraldehyde 3-phosphate: step 2/5. This chain is Phosphoglycerate kinase (pgk), found in Borreliella burgdorferi (strain ATCC 35210 / DSM 4680 / CIP 102532 / B31) (Borrelia burgdorferi).